The primary structure comprises 621 residues: Chaperone protein HtpG (621 aa).

The a; substrate-binding stretch occupies residues 1 to 328 (MTQEKKKFDA…SEDLPLNISR (328 aa)). The b stretch occupies residues 329–544 (ESLQHNNVLE…DTAMDIRMER (216 aa)). The c stretch occupies residues 545–621 (FLIEQKQIAS…LNDILQKAIL (77 aa)).

It belongs to the heat shock protein 90 family. Homodimer.

It localises to the cytoplasm. In terms of biological role, molecular chaperone. Has ATPase activity. The polypeptide is Chaperone protein HtpG (Rickettsia typhi (strain ATCC VR-144 / Wilmington)).